The following is a 333-amino-acid chain: Serine proteinase inhibitor 2 (333 aa).

It belongs to the serpin family. Poxviruses subfamily.

The protein localises to the host cytoplasm. Weak inhibitor of the interleukin-1-beta converting enzyme (ICE) and of granzyme B. Does not form a stable complex with ICE, but can for a stable complex with granzyme B. This Myxoma virus (strain Uriarra) (MYXV) protein is Serine proteinase inhibitor 2 (SERP2).